We begin with the raw amino-acid sequence, 84 residues long: Figainin 2 (84 aa).

The N-terminal stretch at 1-22 (MAFLKKSLFLVLFLGIVSLSVC) is a signal peptide. Positions 23–39 (EEEKREGEEKEEKREEE) are enriched in basic and acidic residues. The interval 23–53 (EEEKREGEEKEEKREEEEGKEENEDGNEEHK) is disordered. The propeptide occupies 23–54 (EEEKREGEEKEEKREEEEGKEENEDGNEEHKE). Residues 40 to 49 (EGKEENEDGN) are compositionally biased toward acidic residues.

As to expression, expressed by the skin glands.

The protein localises to the secreted. In terms of biological role, antimicrobial peptide that displays antibacterial, antiprotozoal, and antiviral activity. Exhibits antibacterial activity against the Gram-positive bacteria S.epidermidis ATCC 12228 (MIC=4 uM), E.casseliflavus ATCC 700327 (MIC=4 uM), S.aureus ATCC 25923 (MIC=8 uM) and E.faecalis ATCC 29212 (MIC=8 uM), and the Gram-negative bacteria E.coli ATCC 25922 (MIC=8 uM), K.pneumoniae ATCC 13883 (MIC=8 uM), the multi-resistant clinical isolate strain K.pneumoniae carbapanemase (KPC) MR (MIC=16 uM), and P.aeruginosa ATCC 27853 (MIC=32 uM). Displays antiprotozoal activity against the epimastigote form of T.cruzi (IC(50)=6.32 uM). Does not show antimicrobial against the fungi C.albicans ATCC 90028 and C.parapsilosis ATCC 22019. Displays antiviral activity against the human viruses chikungunya (EC(50)=17.9 uM), Dengue serotype 4 (EC(50)=20.8 uM) and Yellow Fever (EC(50)=21.8 uM). Shows moderate cytolytic activity against human erythrocytes (HC(50)=48.9 uM), and activates the oxidative burst in human neutrophils. Also displays anti-proliferative effects against MCF-7 breast cancer cells (IC(50)=15.3 uM) and B16F10 murine melanoma cells (IC(50)=12.8 uM). This Boana raniceps (Chaco tree frog) protein is Figainin 2.